The primary structure comprises 361 residues: Caveolae-associated protein 4 (361 aa).

The interval 1-21 (MEHNGSASNADKIHQNRLSNV) is disordered. Positions 100-124 (IKDVKARVEKQQTHVKKVEAKQEEI) form a coiled coil. A phosphoserine mark is found at serine 152, serine 171, and serine 172. Residues 204 to 248 (ENMQKTRQNFDKKVNRIRTRIVTPERRERLRQSGERLRQSGERLK) are a coiled coil. Over residues 230-255 (RERLRQSGERLRQSGERLKQSGERFK) the composition is skewed to basic and acidic residues. Disordered stretches follow at residues 230-283 (RERL…AVAE) and 310-346 (PEALSETDPEEASATHPPQEGGEVSTPEPLKVTFKPQ). Threonine 335 carries the phosphothreonine modification. Serine 354 is modified (phosphoserine).

It belongs to the CAVIN family. Component of the CAVIN complex composed of CAVIN1, CAVIN2, CAVIN3 and CAVIN4. Interacts with CAVIN1, ADRA1A, ADRA1B, MAPK1 and MAPK3. Interacts with CAVIN2; this augments the transactivation of NPPA.

The protein resides in the cytoplasm. The protein localises to the myofibril. Its subcellular location is the sarcomere. It is found in the cytosol. It localises to the cell membrane. The protein resides in the sarcolemma. The protein localises to the membrane. Its subcellular location is the caveola. In terms of biological role, modulates the morphology of formed caveolae in cardiomyocytes, but is not required for caveolar formation. Facilitates the recruitment of MAPK1/3 to caveolae within cardiomyocytes and regulates alpha-1 adrenergic receptor-induced hypertrophic responses in cardiomyocytes through MAPK1/3 activation. Contributes to proper membrane localization and stabilization of caveolin-3 (CAV3) in cardiomyocytes. Induces RHOA activation and activates NPPA transcription and myofibrillar organization through the Rho/ROCK signaling pathway. The chain is Caveolae-associated protein 4 (CAVIN4) from Bos taurus (Bovine).